A 200-amino-acid polypeptide reads, in one-letter code: Molybdenum cofactor guanylyltransferase (200 aa).

Residues 15-17 (LSG), lysine 28, aspartate 74, and aspartate 104 contribute to the GTP site. Residue aspartate 104 participates in Mg(2+) binding.

This sequence belongs to the MobA family. Monomer. Requires Mg(2+) as cofactor.

The protein localises to the cytoplasm. It catalyses the reaction Mo-molybdopterin + GTP + H(+) = Mo-molybdopterin guanine dinucleotide + diphosphate. In terms of biological role, transfers a GMP moiety from GTP to Mo-molybdopterin (Mo-MPT) cofactor (Moco or molybdenum cofactor) to form Mo-molybdopterin guanine dinucleotide (Mo-MGD) cofactor. The polypeptide is Molybdenum cofactor guanylyltransferase (Pseudomonas fluorescens (strain SBW25)).